A 510-amino-acid polypeptide reads, in one-letter code: MNTTETSRAAAPLVLILGLGETGVAAARWCARQGSPLRVADTRAQPGGLAALQAALADATVEYRLGCGEQFPPDLLDGVAQIVLSPGLVPHESPTRELLEQARERNVEVVGEIELFARALAGLAESREYRPRVLAITGTNGKTTVTALTRQLIEAGGMSARAAGNISPAALAALIDALDQDDLPQVWVLELSSFQLETTRTLAPDAAVVLNVTQDHLDWHGDMQAYAQAKARILKPARLAIVNRDDPLTVAMVESLQALNVRSFGRDVPALVGDMGLELGQGVAWLTACESNDFDEPAPAPRRKKDAPPPTRAGGRMSRLMPVDALRIRGVHNALNALAAMQLARSLDLGWGPMLRTLRDYAGEPHRAELVRSIGDVDYINDSKGTNVGATVAALEGLGQQVVLIAGGQGKGQDFSPLVPVVRRHARAVVLIGVDGAAIGKVLEPTGVPCVAAADMREAVRRAAELAQPGDAVLLSPACASFDMFRNYPHRGEVFAAEVQELALDRGEVA.

138-144 (GTNGKTT) is a binding site for ATP. Positions 294–316 (FDEPAPAPRRKKDAPPPTRAGGR) are disordered.

Belongs to the MurCDEF family.

It localises to the cytoplasm. It carries out the reaction UDP-N-acetyl-alpha-D-muramoyl-L-alanine + D-glutamate + ATP = UDP-N-acetyl-alpha-D-muramoyl-L-alanyl-D-glutamate + ADP + phosphate + H(+). It participates in cell wall biogenesis; peptidoglycan biosynthesis. In terms of biological role, cell wall formation. Catalyzes the addition of glutamate to the nucleotide precursor UDP-N-acetylmuramoyl-L-alanine (UMA). The polypeptide is UDP-N-acetylmuramoylalanine--D-glutamate ligase (Bordetella bronchiseptica (strain ATCC BAA-588 / NCTC 13252 / RB50) (Alcaligenes bronchisepticus)).